A 601-amino-acid chain; its full sequence is Ubiquitin carboxyl-terminal hydrolase MINDY-2 (601 aa).

Residues Met1–Ala205 form a disordered region. Residues Glu24–Glu34 show a composition bias toward basic and acidic residues. Phosphothreonine is present on Thr62. At Ser82 the chain carries Phosphoserine. Low complexity-rich tracts occupy residues Glu127–Glu141, Ser148–Phe169, and Gly186–Pro195. The active-site Nucleophile is the Cys244. His426 acts as the Proton acceptor in catalysis. Residues Gly485–Gln537 form a ubiquitin-binding domain (UBD) region. The segment at Arg534–Leu601 is disordered. Residues Ser536–Ser570 are compositionally biased toward low complexity. Over residues Ser577–Leu601 the composition is skewed to basic and acidic residues.

This sequence belongs to the MINDY deubiquitinase family. FAM63 subfamily.

It catalyses the reaction Thiol-dependent hydrolysis of ester, thioester, amide, peptide and isopeptide bonds formed by the C-terminal Gly of ubiquitin (a 76-residue protein attached to proteins as an intracellular targeting signal).. Hydrolase that can remove 'Lys-48'-linked conjugated ubiquitin from proteins. Can also bind to polyubiquitin chains of different linkage types, including 'Lys-6', 'Lys-11', 'Lys-29', 'Lys-33' and 'Lys-63'. May play a regulatory role at the level of protein turnover. The sequence is that of Ubiquitin carboxyl-terminal hydrolase MINDY-2 (Mindy2) from Mus musculus (Mouse).